The chain runs to 217 residues: Elongation factor Ts (217 aa).

Residues 82–85 (TDFV) are involved in Mg(2+) ion dislocation from EF-Tu.

It belongs to the EF-Ts family.

The protein localises to the cytoplasm. In terms of biological role, associates with the EF-Tu.GDP complex and induces the exchange of GDP to GTP. It remains bound to the aminoacyl-tRNA.EF-Tu.GTP complex up to the GTP hydrolysis stage on the ribosome. This is Elongation factor Ts from Prochlorococcus marinus (strain SARG / CCMP1375 / SS120).